A 727-amino-acid polypeptide reads, in one-letter code: NADH-ubiquinone oxidoreductase 75 kDa subunit, mitochondrial (727 aa).

A mitochondrion-targeting transit peptide spans 1–23 (MLRIPVRKALVGLSKSSKGCVRT). In terms of domain architecture, 2Fe-2S ferredoxin-type spans 30–108 (NLIEVFVDGQ…GWNILTNSEK (79 aa)). Residues C64, C75, and C78 each contribute to the [2Fe-2S] cluster site. K84 is modified (N6-acetyllysine). C92 contacts [2Fe-2S] cluster. Residues 108–147 (KTKKAREGVMEFLLANHPLDCPICDQGGECDLQDQSMMFG) enclose the 4Fe-4S His(Cys)3-ligated-type domain. Positions 124, 128, 131, 137, 176, 179, 182, and 226 each coordinate [4Fe-4S] cluster. The region spanning 245-301 (TRKTESIDVMDAVGSNIVVSTRTGEVMRILPRMHEDINEEWISDKTRFAYDGLKRQR) is the 4Fe-4S Mo/W bis-MGD-type domain. An N6-acetyllysine mark is found at K499 and K709.

This sequence belongs to the complex I 75 kDa subunit family. In terms of assembly, core subunit of respiratory chain NADH dehydrogenase (Complex I) which is composed of 45 different subunits. This is the largest subunit of complex I and it is a component of the iron-sulfur (IP) fragment of the enzyme. Complex I associates with ubiquinol-cytochrome reductase complex (Complex III) to form supercomplexes. Interacts with MDM2 and AKAP1. The cofactor is [2Fe-2S] cluster. [4Fe-4S] cluster serves as cofactor.

The protein resides in the mitochondrion inner membrane. It carries out the reaction a ubiquinone + NADH + 5 H(+)(in) = a ubiquinol + NAD(+) + 4 H(+)(out). Functionally, core subunit of the mitochondrial membrane respiratory chain NADH dehydrogenase (Complex I) which catalyzes electron transfer from NADH through the respiratory chain, using ubiquinone as an electron acceptor. Essential for catalysing the entry and efficient transfer of electrons within complex I. Plays a key role in the assembly and stability of complex I and participates in the association of complex I with ubiquinol-cytochrome reductase complex (Complex III) to form supercomplexes. The sequence is that of NADH-ubiquinone oxidoreductase 75 kDa subunit, mitochondrial (NDUFS1) from Bos taurus (Bovine).